The following is a 569-amino-acid chain: Cytosolic purine 5'-nucleotidase (569 aa).

Residue aspartate 52 is the Nucleophile of the active site. The IMP site is built by aspartate 52 and aspartate 54. The Mg(2+) site is built by aspartate 52 and aspartate 54. Aspartate 54 serves as the catalytic Proton donor. ATP-binding residues include arginine 144 and asparagine 154. IMP-binding residues include arginine 202, aspartate 206, lysine 215, threonine 249, asparagine 250, serine 251, and lysine 292. Position 351 (aspartate 351) interacts with Mg(2+). ATP contacts are provided by glutamine 453 and arginine 456. A disordered region spans residues 527–569 (SISEIKPPNLFPQAPQEITHCHDEDDDEEEEEEEVEEEEEEEE). Positions 548–569 (HDEDDDEEEEEEEVEEEEEEEE) are required for tetramer assembly. Positions 550-569 (EDDDEEEEEEEVEEEEEEEE) are enriched in acidic residues.

Belongs to the 5'(3')-deoxyribonucleotidase family. As to quaternary structure, homotetramer. Mg(2+) serves as cofactor.

The protein localises to the cytoplasm. Its subcellular location is the cytosol. It catalyses the reaction a ribonucleoside 5'-phosphate + H2O = a ribonucleoside + phosphate. It carries out the reaction a 2'-deoxyribonucleoside + a ribonucleoside 5'-phosphate = a ribonucleoside + a 2'-deoxyribonucleoside 5'-phosphate. The catalysed reaction is IMP + H2O = inosine + phosphate. The enzyme catalyses GMP + H2O = guanosine + phosphate. It catalyses the reaction dGMP + H2O = 2'-deoxyguanosine + phosphate. It carries out the reaction dIMP + H2O = 2'-deoxyinosine + phosphate. The catalysed reaction is XMP + H2O = xanthosine + phosphate. The enzyme catalyses inosine + GMP = guanosine + IMP. It catalyses the reaction dGMP + inosine = 2'-deoxyguanosine + IMP. It carries out the reaction dIMP + inosine = 2'-deoxyinosine + IMP. The catalysed reaction is inosine + UMP = uridine + IMP. The enzyme catalyses inosine + CMP = cytidine + IMP. It catalyses the reaction inosine + AMP = IMP + adenosine. Allosterically activated by various compounds including ATP, 2,3-BPG/2,3-Bisphosphoglyceric acid and Ap4A/P1,P4-bis(5'-adenosyl) tetraphosphate. Binding of an allosteric activator is a prerequisiste to magnesium and substrate binding. Inhibited by inorganic phosphate. Inhibited by inosine, guanosine, p-chloromercuribenzoate and NaF. Broad specificity cytosolic 5'-nucleotidase that catalyzes the dephosphorylation of 6-hydroxypurine nucleoside 5'-monophosphates. In addition, possesses a phosphotransferase activity by which it can transfer a phosphate from a donor nucleoside monophosphate to an acceptor nucleoside, preferably inosine, deoxyinosine and guanosine. Has the highest activities for IMP and GMP followed by dIMP, dGMP and XMP. Could also catalyze the transfer of phosphates from pyrimidine monophosphates but with lower efficiency. Through these activities regulates the purine nucleoside/nucleotide pools within the cell. This chain is Cytosolic purine 5'-nucleotidase (NT5C2), found in Gallus gallus (Chicken).